The primary structure comprises 443 residues: Adenylyltransferase and sulfurtransferase UBA4 (443 aa).

Residues Gly-83, Asp-104, 111 to 115, Lys-128, and 172 to 173 each bind ATP; these read SNLHR and DT. Residues Cys-214 and Cys-217 each coordinate Zn(2+). Residue Cys-231 is the Glycyl thioester intermediate; for adenylyltransferase activity of the active site. Residues Cys-292 and Cys-295 each contribute to the Zn(2+) site. Residues 343-441 form the Rhodanese domain; the sequence is QSKAPVLLDV…WSDIVNPKFP (99 aa). Residue Cys-400 is the Cysteine persulfide intermediate; for sulfurtransferase activity of the active site.

This sequence in the N-terminal section; belongs to the HesA/MoeB/ThiF family. UBA4 subfamily. Zn(2+) serves as cofactor.

The protein localises to the cytoplasm. The protein resides in the cytosol. The protein operates within tRNA modification; 5-methoxycarbonylmethyl-2-thiouridine-tRNA biosynthesis. Functionally, plays a central role in 2-thiolation of mcm(5)S(2)U at tRNA wobble positions of cytosolic tRNA(Lys), tRNA(Glu) and tRNA(Gln). Acts by mediating the C-terminal thiocarboxylation of sulfur carrier URM1. Its N-terminus first activates URM1 as acyl-adenylate (-COAMP), then the persulfide sulfur on the catalytic cysteine is transferred to URM1 to form thiocarboxylation (-COSH) of its C-terminus. The reaction probably involves hydrogen sulfide that is generated from the persulfide intermediate and that acts as a nucleophile towards URM1. Subsequently, a transient disulfide bond is formed. Does not use thiosulfate as sulfur donor; NFS1 probably acting as a sulfur donor for thiocarboxylation reactions. Prior mcm(5) tRNA modification by the elongator complex is required for 2-thiolation. May also be involved in protein urmylation. This chain is Adenylyltransferase and sulfurtransferase UBA4, found in Scheffersomyces stipitis (strain ATCC 58785 / CBS 6054 / NBRC 10063 / NRRL Y-11545) (Yeast).